The following is a 366-amino-acid chain: Apolipoprotein A-V (366 aa).

Residues methionine 1–alanine 23 form the signal peptide. Coiled-coil stretches lie at residues alanine 54–aspartate 157 and threonine 236–alanine 262. Phosphothreonine; by FAM20C is present on threonine 55. The residue at position 59 (serine 59) is a Phosphoserine.

The protein belongs to the apolipoprotein A1/A4/E family. Interacts with GPIHBP1. Interacts with SORL1; this interaction leads to APOA5 internalization and sorting either to lysosomes and degradation, or to the trans-Golgi network. In terms of processing, phosphorylated by FAM20C in the extracellular medium. In terms of tissue distribution, liver and plasma.

It is found in the secreted. The protein resides in the early endosome. The protein localises to the late endosome. Its subcellular location is the golgi apparatus. It localises to the trans-Golgi network. Functionally, minor apolipoprotein mainly associated with HDL and to a lesser extent with VLDL. May also be associated with chylomicrons. Important determinant of plasma triglyceride (TG) levels by both being a potent stimulator of apo-CII lipoprotein lipase (LPL) TG hydrolysis and an inhibitor of the hepatic VLDL-TG production rate (without affecting the VLDL-apoB production rate). Activates poorly lecithin:cholesterol acyltransferase (LCAT) and does not enhance efflux of cholesterol from macrophages. Binds heparin. This chain is Apolipoprotein A-V (APOA5), found in Homo sapiens (Human).